The chain runs to 306 residues: MKQRTLANPIKAKGVGLHTGHKSIMTLRPAPVNTGIVFRRIDQTPIVEFPVSPELVKETMLCTTIVQEQDNQKIKIATIEHLMSALAGVGIDNLYIDITADEVPIMDGSASHFIFLLQSAGIQLQEASKKFIRIKKQVKVQNEKGGVAEFSPYEGFRLNFSIEFDHPAFDQTAEKMTLSFSSTAYFKEVSRARTFGFMKDMEKLRAQNLGLGAGLHNAIGLDENGVVNQEGLRDKDEFVRHKILDAVGDLYMAGHPIIGEFTAHKSGHALNNQLLRALVADPEAYEVVTYDDEEPPIQYGSSKILV.

Positions 81, 241, and 245 each coordinate Zn(2+). Catalysis depends on H268, which acts as the Proton donor.

This sequence belongs to the LpxC family. Zn(2+) serves as cofactor.

It carries out the reaction a UDP-3-O-[(3R)-3-hydroxyacyl]-N-acetyl-alpha-D-glucosamine + H2O = a UDP-3-O-[(3R)-3-hydroxyacyl]-alpha-D-glucosamine + acetate. It functions in the pathway glycolipid biosynthesis; lipid IV(A) biosynthesis; lipid IV(A) from (3R)-3-hydroxytetradecanoyl-[acyl-carrier-protein] and UDP-N-acetyl-alpha-D-glucosamine: step 2/6. Catalyzes the hydrolysis of UDP-3-O-myristoyl-N-acetylglucosamine to form UDP-3-O-myristoylglucosamine and acetate, the committed step in lipid A biosynthesis. The protein is UDP-3-O-acyl-N-acetylglucosamine deacetylase of Hydrogenovibrio crunogenus (strain DSM 25203 / XCL-2) (Thiomicrospira crunogena).